The sequence spans 160 residues: Transcriptional repressor NrdR (160 aa).

Over residues Met1–Thr11 the composition is skewed to polar residues. The tract at residues Met1–Glu20 is disordered. A zinc finger spans residues Cys3 to Cys34. The ATP-cone domain occupies Leu49–Asp139.

It belongs to the NrdR family. It depends on Zn(2+) as a cofactor.

Functionally, negatively regulates transcription of bacterial ribonucleotide reductase nrd genes and operons by binding to NrdR-boxes. The sequence is that of Transcriptional repressor NrdR from Bradyrhizobium diazoefficiens (strain JCM 10833 / BCRC 13528 / IAM 13628 / NBRC 14792 / USDA 110).